Here is a 311-residue protein sequence, read N- to C-terminus: CAAX prenyl protease 2 (311 aa).

3 consecutive transmembrane segments (helical) span residues 14–34 (VATC…PTVI), 51–71 (FICA…ILPI), and 94–114 (VVYP…LKLF). Residue E164 is the Proton donor/acceptor of the active site. The helical transmembrane segment at 173–193 (IPLLLCAGFRINTAIFLCPVL) threads the bilayer. H198 functions as the Proton donor/acceptor in the catalytic mechanism. A run of 3 helical transmembrane segments spans residues 219–239 (IVGL…FLFI), 244–264 (LAAP…VLYA), and 268–288 (GLVS…LFPL).

This sequence belongs to the peptidase U48 family. In terms of tissue distribution, expressed in seeds, stems, leaves, flowers and siliques.

Its subcellular location is the endoplasmic reticulum membrane. It carries out the reaction Hydrolyzes the peptide bond -P2-(S-farnesyl or geranylgeranyl)C-P1'-P2'-P3'-COOH where P1' and P2' are amino acids with aliphatic sidechains and P3' is any C-terminal residue.. With respect to regulation, inhibited in vitro by L-1-tosylamido-2-phenylethyl chloromethyl ketone (TPCK) and N-ethylmaleimide, but not by EDTA. Protease involved in the processing of a variety of prenylated proteins containing the C-terminal CAAX motif, where C is a cysteine modified with an isoprenoid lipid, A is an aliphatic amino acid and X is any C-terminal amino acid. Proteolytically removes the C-terminal three residues of farnesylated and geranylated proteins, leaving the prenylated cysteine as the new C-terminus. The substrate specificity is only partially overlapping with that of FACE1. CAAX processing is likely required for subcellular targeting of prenylated proteins to the plasma membrane. The sequence is that of CAAX prenyl protease 2 (FACE2) from Arabidopsis thaliana (Mouse-ear cress).